We begin with the raw amino-acid sequence, 296 residues long: Phosphoribosylaminoimidazole-succinocarboxamide synthase (296 aa).

Belongs to the SAICAR synthetase family.

The catalysed reaction is 5-amino-1-(5-phospho-D-ribosyl)imidazole-4-carboxylate + L-aspartate + ATP = (2S)-2-[5-amino-1-(5-phospho-beta-D-ribosyl)imidazole-4-carboxamido]succinate + ADP + phosphate + 2 H(+). Its pathway is purine metabolism; IMP biosynthesis via de novo pathway; 5-amino-1-(5-phospho-D-ribosyl)imidazole-4-carboxamide from 5-amino-1-(5-phospho-D-ribosyl)imidazole-4-carboxylate: step 1/2. The chain is Phosphoribosylaminoimidazole-succinocarboxamide synthase from Geobacter sp. (strain M21).